The sequence spans 379 residues: Citrate synthase (379 aa).

Active-site residues include histidine 225, histidine 265, and aspartate 316.

The protein belongs to the citrate synthase family. As to quaternary structure, homodimer.

The catalysed reaction is oxaloacetate + acetyl-CoA + H2O = citrate + CoA + H(+). It functions in the pathway carbohydrate metabolism; tricarboxylic acid cycle; isocitrate from oxaloacetate: step 1/2. Functionally, might regulate the synthesis and function of enzymes involved in later enzymatic steps of Krebs cycle. The sequence is that of Citrate synthase (citZ) from Haloferax volcanii (strain ATCC 29605 / DSM 3757 / JCM 8879 / NBRC 14742 / NCIMB 2012 / VKM B-1768 / DS2) (Halobacterium volcanii).